We begin with the raw amino-acid sequence, 197 residues long: Recombination protein RecR (197 aa).

The C4-type zinc finger occupies 56 to 71; it reads CERCNTFTETEICQRC. Residues 79 to 174 form the Toprim domain; sequence SLLCVVEMPA…RVSRLSRGVP (96 aa).

Belongs to the RecR family.

Functionally, may play a role in DNA repair. It seems to be involved in an RecBC-independent recombinational process of DNA repair. It may act with RecF and RecO. This Aromatoleum aromaticum (strain DSM 19018 / LMG 30748 / EbN1) (Azoarcus sp. (strain EbN1)) protein is Recombination protein RecR.